The primary structure comprises 213 residues: Large ribosomal subunit protein uL3 (213 aa).

Residue glutamine 151 is modified to N5-methylglutamine.

Belongs to the universal ribosomal protein uL3 family. Part of the 50S ribosomal subunit. Forms a cluster with proteins L14 and L19. In terms of processing, methylated by PrmB.

One of the primary rRNA binding proteins, it binds directly near the 3'-end of the 23S rRNA, where it nucleates assembly of the 50S subunit. The chain is Large ribosomal subunit protein uL3 from Rhizobium etli (strain CIAT 652).